Here is a 442-residue protein sequence, read N- to C-terminus: Histidine--tRNA ligase (442 aa).

The protein belongs to the class-II aminoacyl-tRNA synthetase family. Homodimer.

Its subcellular location is the cytoplasm. The enzyme catalyses tRNA(His) + L-histidine + ATP = L-histidyl-tRNA(His) + AMP + diphosphate + H(+). The sequence is that of Histidine--tRNA ligase from Helicobacter hepaticus (strain ATCC 51449 / 3B1).